Consider the following 468-residue polypeptide: Protein CA_C1420 (468 aa).

Positions 1 to 289 are unknown; sequence MSLNGFYLLP…LKELERIRKD (289 aa). The AMMECR1 domain maps to 296-468; it reads QEKDPYVKLA…KFMVTRHKES (173 aa).

This is Protein CA_C1420 from Clostridium acetobutylicum (strain ATCC 824 / DSM 792 / JCM 1419 / IAM 19013 / LMG 5710 / NBRC 13948 / NRRL B-527 / VKM B-1787 / 2291 / W).